The following is a 127-amino-acid chain: Holo-[acyl-carrier-protein] synthase (127 aa).

Residues Asp-7 and Glu-56 each contribute to the Mg(2+) site.

The protein belongs to the P-Pant transferase superfamily. AcpS family. The cofactor is Mg(2+).

Its subcellular location is the cytoplasm. The catalysed reaction is apo-[ACP] + CoA = holo-[ACP] + adenosine 3',5'-bisphosphate + H(+). Functionally, transfers the 4'-phosphopantetheine moiety from coenzyme A to a Ser of acyl-carrier-protein. This Onion yellows phytoplasma (strain OY-M) protein is Holo-[acyl-carrier-protein] synthase.